The following is a 146-amino-acid chain: Hemoglobin subunit beta (146 aa).

Valine 1 carries the post-translational modification N-acetylvaline. The region spanning 2–146 is the Globin domain; the sequence is HLSGGEKSAV…VAHALGHKYH (145 aa). Threonine 12 is subject to Phosphothreonine. Position 59 is an N6-acetyllysine (lysine 59). Histidine 63 contacts heme b. Lysine 82 carries the N6-acetyllysine modification. Residue histidine 92 coordinates heme b. Cysteine 93 carries the S-nitrosocysteine modification. Lysine 144 carries the post-translational modification N6-acetyllysine.

Belongs to the globin family. In terms of assembly, heterotetramer of two alpha chains and two beta chains. As to expression, red blood cells.

Involved in oxygen transport from the lung to the various peripheral tissues. This is Hemoglobin subunit beta (HBB) from Ornithorhynchus anatinus (Duckbill platypus).